The primary structure comprises 388 residues: Probable proton-coupled zinc antiporter SLC30A3 (388 aa).

Residues 1–46 (MEPSPAAGGLETTRLVSPRDRGGAGGSLRLKSLFTEPSEPLPEESK) form a disordered region. The Cytoplasmic segment spans residues 1–75 (MEPSPAAGGL…TPERLHARRQ (75 aa)). Residues 76–96 (LYAACAVCFVFMAGEVVGGYL) traverse the membrane as a helical segment. Over 97 to 105 (AHSLAIMTD) the chain is Lumenal. The helical transmembrane segment at 106 to 126 (AAHLLADVGSMMGSLFSLWLS) threads the bilayer. Residues histidine 108 and aspartate 112 each coordinate Zn(2+). The Cytoplasmic segment spans residues 127-145 (TRPATRTMTFGWHRSETLG). Residues 146–166 (ALASVVSLWMVTGILLYLAFV) form a helical membrane-spanning segment. The Lumenal portion of the chain corresponds to 167 to 177 (RLLHSDYHIEG). A helical transmembrane segment spans residues 178–198 (GAMLLTASIAVCANLLMAFVL). Topologically, residues 199–235 (HQAGPPHSHGSRGAEYAPLEEGPEEPLPLGNTSVRAA) are cytoplasmic. The helical transmembrane segment at 236 to 256 (FVHVLGDLLQSFGVLAASILI) threads the bilayer. 2 residues coordinate Zn(2+): histidine 238 and aspartate 242. Residues 257 to 264 (YFKPQYKA) lie on the Lumenal side of the membrane. The helical transmembrane segment at 265–285 (ADPISTFLFSICALGSTAPTL) threads the bilayer. Over 286 to 388 (RDVLRILMEG…CLRCQEPPQA (103 aa)) the chain is Cytoplasmic. Tyrosine 357 participates in a covalent cross-link: Dityrosine (Tyr-Tyr) (interchain with Y-372). Tyrosine 372 is covalently cross-linked (Dityrosine (Tyr-Tyr) (interchain with Y-357)).

The protein belongs to the cation diffusion facilitator (CDF) transporter (TC 2.A.4) family. SLC30A subfamily. Homodimer; dityrosine-linked. Homodimerization seems specific of the human protein and enhances the zinc transport efficiency. Interacts with TMEM163. In terms of processing, homodimerization through dityrosine bonds is stimulated by oxidative stress.

The protein resides in the cytoplasmic vesicle. It is found in the secretory vesicle. It localises to the synaptic vesicle membrane. Its subcellular location is the synapse. The protein localises to the synaptosome. The protein resides in the late endosome membrane. It is found in the lysosome membrane. It catalyses the reaction Zn(2+)(in) + 2 H(+)(out) = Zn(2+)(out) + 2 H(+)(in). Functionally, probable proton-coupled zinc ion antiporter mediating the import of zinc from cytoplasm into synaptic vesicles and participating to cellular zinc ion homeostasis in the brain. The chain is Probable proton-coupled zinc antiporter SLC30A3 from Homo sapiens (Human).